The chain runs to 552 residues: Low-affinity Fe(2+) transport protein (552 aa).

Over 1 to 97 (MGKIAEFLGN…DFLVRVAGSQ (97 aa)) the chain is Extracellular. K39 is covalently cross-linked (Glycyl lysine isopeptide (Lys-Gly) (interchain with G-Cter in ubiquitin)). Phosphoserine occurs at positions 48 and 50. The chain crosses the membrane as a helical span at residues 98 to 118 (AVFFIVWIILIIWVVIGIVYN). Residues 119-225 (APFNWQVVMQ…SNVASRYMGS (107 aa)) are Cytoplasmic-facing. A helical membrane pass occupies residues 226–246 (IAAMVIFWIGIFVWIGCGAIP). Residues 247–271 (KDAGNTPPYTGETTGSNPRLKKFSD) are Extracellular-facing. Residues 272-292 (AWQMYINTAVAVSLLICTTFL) traverse the membrane as a helical segment. Residues 293 to 354 (QNIRARHDYF…GRKMIDWYAD (62 aa)) lie on the Cytoplasmic side of the membrane. A helical transmembrane segment spans residues 355–375 (IIGTGIGVLIGVAVFATWIGI). Residues 376–383 (GSPMKWDD) lie on the Extracellular side of the membrane. Residues 384 to 404 (NWWLIIGTYTGLIGFLDGFVL) form a helical membrane-spanning segment. Topologically, residues 405–465 (REVYFRIVQH…SQYINRICST (61 aa)) are cytoplasmic. The helical transmembrane segment at 466–486 (PWSVLVSVIIIIGLICIASGL) threads the bilayer. At 487–493 (RWSTTGQ) the chain is on the extracellular side. The chain crosses the membrane as a helical span at residues 494 to 514 (LIANTPTMIIEEFFLLVLLQA). Residues 515 to 552 (HNWADRQRRVEVTALYARRRILLSYVEKRFPEVMMLEK) lie on the Cytoplasmic side of the membrane.

This sequence belongs to the FET4 family.

It localises to the membrane. Functionally, required for Fe(2+) ion low affinity uptake. The chain is Low-affinity Fe(2+) transport protein (FET4) from Saccharomyces cerevisiae (strain ATCC 204508 / S288c) (Baker's yeast).